We begin with the raw amino-acid sequence, 286 residues long: Aminoglycoside N(3)-acetyltransferase VIII (286 aa).

Belongs to the antibiotic N-acetyltransferase family.

The enzyme catalyses a 2-deoxystreptamine antibiotic + acetyl-CoA = an N(3)-acetyl-2-deoxystreptamine antibiotic + CoA + H(+). Functionally, resistance to neomycin. The protein is Aminoglycoside N(3)-acetyltransferase VIII (aacC8) of Streptomyces fradiae (Streptomyces roseoflavus).